The sequence spans 159 residues: Phosphopantetheine adenylyltransferase (159 aa).

Residue serine 8 coordinates substrate. ATP-binding positions include 8–9 and histidine 16; that span reads SF. Residues lysine 40, threonine 72, and arginine 86 each coordinate substrate. ATP contacts are provided by residues 87–89, glutamate 97, and 122–128; these read GLR and YSFLSSS.

Belongs to the bacterial CoaD family. As to quaternary structure, homohexamer. Requires Mg(2+) as cofactor.

Its subcellular location is the cytoplasm. The catalysed reaction is (R)-4'-phosphopantetheine + ATP + H(+) = 3'-dephospho-CoA + diphosphate. It participates in cofactor biosynthesis; coenzyme A biosynthesis; CoA from (R)-pantothenate: step 4/5. Functionally, reversibly transfers an adenylyl group from ATP to 4'-phosphopantetheine, yielding dephospho-CoA (dPCoA) and pyrophosphate. In Synechocystis sp. (strain ATCC 27184 / PCC 6803 / Kazusa), this protein is Phosphopantetheine adenylyltransferase.